The primary structure comprises 45 residues: Osteocalcin (45 aa).

One can recognise a Gla domain in the interval 1-41 (AAGELTLTQLESLREVCEANLACEDMMDAQGIIAAYTAYYG). E11, E15, E18, and E24 together coordinate Ca(2+). Residues E11, E15, and E18 each carry the 4-carboxyglutamate modification. A disulfide bond links C17 and C23.

This sequence belongs to the osteocalcin/matrix Gla protein family. Gamma-carboxyglutamate residues are formed by vitamin K dependent carboxylation by GGCX. These residues are essential for the binding of calcium. Also found in smaller quantities in dentin.

It is found in the secreted. Functionally, the carboxylated form is one of the main organic components of the bone matrix, which constitutes 1-2% of the total bone protein. The carboxylated form binds strongly to apatite and calcium. The protein is Osteocalcin (bglap) of Lepomis macrochirus (Bluegill).